Consider the following 894-residue polypeptide: DNA mismatch repair protein MutS (894 aa).

629-636 (GPNMGGKS) is a binding site for ATP. The disordered stretch occupies residues 819 to 840 (TPTPQLDLFAPPPHPDTSDDDE).

Belongs to the DNA mismatch repair MutS family.

Its function is as follows. This protein is involved in the repair of mismatches in DNA. It is possible that it carries out the mismatch recognition step. This protein has a weak ATPase activity. The sequence is that of DNA mismatch repair protein MutS from Cupriavidus pinatubonensis (strain JMP 134 / LMG 1197) (Cupriavidus necator (strain JMP 134)).